We begin with the raw amino-acid sequence, 205 residues long: Dephospho-CoA kinase (205 aa).

The DPCK domain occupies 7 to 205 (IIGITGRIAS…QEIINYERFE (199 aa)). 15–20 (ASGKDA) is a binding site for ATP.

It belongs to the CoaE family.

It is found in the cytoplasm. The catalysed reaction is 3'-dephospho-CoA + ATP = ADP + CoA + H(+). It participates in cofactor biosynthesis; coenzyme A biosynthesis; CoA from (R)-pantothenate: step 5/5. In terms of biological role, catalyzes the phosphorylation of the 3'-hydroxyl group of dephosphocoenzyme A to form coenzyme A. The sequence is that of Dephospho-CoA kinase from Borrelia garinii subsp. bavariensis (strain ATCC BAA-2496 / DSM 23469 / PBi) (Borreliella bavariensis).